The chain runs to 468 residues: Ubiquinone biosynthesis monooxygenase COQ6, mitochondrial (468 aa).

The N-terminal 28 residues, 1-28, are a transit peptide targeting the mitochondrion; that stretch reads MAARLVSRCGAVRAAPHSGPLVSWRRWS.

Belongs to the UbiH/COQ6 family. As to quaternary structure, component of a multi-subunit COQ enzyme complex, composed of at least COQ3, COQ4, COQ5, COQ6, COQ7 and COQ9. Interacts with COQ8B and COQ7. The cofactor is FAD. In terms of tissue distribution, widely expressed.

The protein resides in the mitochondrion inner membrane. It is found in the golgi apparatus. It localises to the cell projection. The catalysed reaction is 4-hydroxy-3-(all-trans-decaprenyl)benzoate + 2 reduced [2Fe-2S]-[ferredoxin] + O2 + 2 H(+) = 3,4-dihydroxy-5-(all-trans-decaprenyl)benzoate + 2 oxidized [2Fe-2S]-[ferredoxin] + H2O. It carries out the reaction 2-methoxy-6-(all-trans-decaprenyl)phenol + 2 reduced [2Fe-2S]-[ferredoxin] + O2 + 2 H(+) = 2-methoxy-6-(all-trans-decaprenyl)benzene-1,4-diol + 2 oxidized [2Fe-2S]-[ferredoxin] + H2O. It participates in cofactor biosynthesis; ubiquinone biosynthesis. FAD-dependent monooxygenase required for two non-consecutive steps during ubiquinone biosynthesis. Required for the C5-ring hydroxylation during ubiquinone biosynthesis by catalyzing the hydroxylation of 4-hydroxy-3-(all-trans-decaprenyl)benzoic acid to 3,4-dihydroxy-5-(all-trans-decaprenyl)benzoic acid. Also acts downstream of COQ4, for the C1-hydroxylation during ubiquinone biosynthesis by catalyzing the hydroxylation of 2-methoxy-6-(all-trans-decaprenyl)phenol to 2-methoxy-6-(all-trans-decaprenyl)benzene-1,4-diol. The electrons required for the hydroxylation reaction are funneled indirectly to COQ6 from NADPH via a ferredoxin/ferredoxin reductase system composed of FDX2 and FDXR. The polypeptide is Ubiquinone biosynthesis monooxygenase COQ6, mitochondrial (Homo sapiens (Human)).